Consider the following 319-residue polypeptide: Ornithine carbamoyltransferase (319 aa).

Residues 57–60 (STRT), Q84, R108, and 135–138 (HPCQ) contribute to the carbamoyl phosphate site. Residues N166, D230, and 234 to 235 (SM) each bind L-ornithine. Residues 270–271 (CL) and R298 contribute to the carbamoyl phosphate site.

This sequence belongs to the aspartate/ornithine carbamoyltransferase superfamily. OTCase family.

It localises to the cytoplasm. The enzyme catalyses carbamoyl phosphate + L-ornithine = L-citrulline + phosphate + H(+). It participates in amino-acid biosynthesis; L-arginine biosynthesis; L-arginine from L-ornithine and carbamoyl phosphate: step 1/3. Its function is as follows. Reversibly catalyzes the transfer of the carbamoyl group from carbamoyl phosphate (CP) to the N(epsilon) atom of ornithine (ORN) to produce L-citrulline. The chain is Ornithine carbamoyltransferase (argF) from Bacillus subtilis (strain 168).